Here is a 90-residue protein sequence, read N- to C-terminus: Small ribosomal subunit protein uS17 (90 aa).

Belongs to the universal ribosomal protein uS17 family. As to quaternary structure, part of the 30S ribosomal subunit.

Functionally, one of the primary rRNA binding proteins, it binds specifically to the 5'-end of 16S ribosomal RNA. This chain is Small ribosomal subunit protein uS17, found in Burkholderia ambifaria (strain ATCC BAA-244 / DSM 16087 / CCUG 44356 / LMG 19182 / AMMD) (Burkholderia cepacia (strain AMMD)).